Consider the following 127-residue polypeptide: Major sperm protein 78 (127 aa).

Ala2 carries the N-acetylalanine modification. The MSP domain maps to 9 to 126 (DIQTQPGTKI…RRKNLPIEYN (118 aa)).

In terms of tissue distribution, sperm.

The protein localises to the cell projection. The protein resides in the pseudopodium. Its subcellular location is the cytoplasm. It is found in the cytoskeleton. Central component in molecular interactions underlying sperm crawling. Forms an extensive filament system that extends from sperm villipoda, along the leading edge of the pseudopod. This is Major sperm protein 78 (msp-78) from Caenorhabditis elegans.